The primary structure comprises 165 residues: Molybdopterin synthase catalytic subunit (165 aa).

Substrate-binding positions include 42 to 44 (WVR), 109 to 110 (HR), lysine 125, and 132 to 134 (KLE).

This sequence belongs to the MoaE family. In terms of assembly, heterotetramer of 2 MoaD subunits and 2 MoaE subunits. Also stable as homodimer. The enzyme changes between these two forms during catalysis.

The enzyme catalyses 2 [molybdopterin-synthase sulfur-carrier protein]-C-terminal-Gly-aminoethanethioate + cyclic pyranopterin phosphate + H2O = molybdopterin + 2 [molybdopterin-synthase sulfur-carrier protein]-C-terminal Gly-Gly + 2 H(+). Its pathway is cofactor biosynthesis; molybdopterin biosynthesis. In terms of biological role, converts molybdopterin precursor Z into molybdopterin. This requires the incorporation of two sulfur atoms into precursor Z to generate a dithiolene group. The sulfur is provided by MoaD. The polypeptide is Molybdopterin synthase catalytic subunit (moaE) (Synechococcus elongatus (strain ATCC 33912 / PCC 7942 / FACHB-805) (Anacystis nidulans R2)).